A 1589-amino-acid chain; its full sequence is Centrosomal protein of 170 kDa protein B (1589 aa).

Residues Ile23–Ile73 form the FHA domain. 4 disordered regions span residues Arg130–Pro261, Ile287–Ser309, Leu325–Arg388, and Phe409–Glu583. 2 stretches are compositionally biased toward basic and acidic residues: residues Arg147–Gly156 and Pro243–Glu253. Residues Gly330–Val344 are compositionally biased toward basic and acidic residues. Ser360 and Ser421 each carry phosphoserine. Basic and acidic residues-rich tracts occupy residues Pro430–Pro446 and Leu467–Leu476. A compositionally biased stretch (low complexity) spans Ser478–Pro489. A phosphoserine mark is found at Ser480 and Ser492. The span at Glu520–Leu530 shows a compositional bias: pro residues. Ser536 is subject to Phosphoserine. Residues Val538 to Thr548 show a composition bias toward pro residues. Thr542 bears the Phosphothreonine mark. 16 positions are modified to phosphoserine: Ser597, Ser619, Ser655, Ser711, Ser721, Ser746, Ser748, Ser751, Ser753, Ser772, Ser829, Ser853, Ser954, Ser972, Ser986, and Ser988. Disordered stretches follow at residues Pro598–Leu895, Asp934–Phe1316, Asp1350–Ser1374, and Ala1532–Ala1552. A compositionally biased stretch (low complexity) spans Ser711 to Gly722. A compositionally biased stretch (polar residues) spans Asp957–Ser972. A compositionally biased stretch (basic residues) spans Ser1029 to Arg1038. 3 positions are modified to phosphoserine: Ser1135, Ser1179, and Ser1199. A compositionally biased stretch (polar residues) spans Ala1221 to Pro1230. Low complexity predominate over residues Pro1286–Pro1301. Position 1304 is a phosphothreonine (Thr1304). 2 positions are modified to phosphoserine: Ser1356 and Ser1362. Positions Ala1363–Ser1374 are enriched in polar residues. Residues Ala1542–Ala1552 are compositionally biased toward low complexity. Residues Ser1545 and Ser1548 each carry the phosphoserine modification.

The protein belongs to the CEP170 family.

It is found in the cytoplasm. Its subcellular location is the cytoskeleton. Its function is as follows. Plays a role in microtubule organization. This is Centrosomal protein of 170 kDa protein B (CEP170B) from Homo sapiens (Human).